We begin with the raw amino-acid sequence, 186 residues long: Peptidyl-tRNA hydrolase (186 aa).

Tyr14 contacts tRNA. Residue His19 is the Proton acceptor of the active site. Positions 61, 63, and 107 each coordinate tRNA.

This sequence belongs to the PTH family. Monomer.

It is found in the cytoplasm. It carries out the reaction an N-acyl-L-alpha-aminoacyl-tRNA + H2O = an N-acyl-L-amino acid + a tRNA + H(+). Hydrolyzes ribosome-free peptidyl-tRNAs (with 1 or more amino acids incorporated), which drop off the ribosome during protein synthesis, or as a result of ribosome stalling. Functionally, catalyzes the release of premature peptidyl moieties from peptidyl-tRNA molecules trapped in stalled 50S ribosomal subunits, and thus maintains levels of free tRNAs and 50S ribosomes. This is Peptidyl-tRNA hydrolase from Helicobacter pylori (strain J99 / ATCC 700824) (Campylobacter pylori J99).